A 473-amino-acid polypeptide reads, in one-letter code: Photosystem II CP43 reaction center protein (473 aa).

Positions 1–14 (MKTLYSLRRFYHVE) are excised as a propeptide. Threonine 15 carries the post-translational modification N-acetylthreonine. Threonine 15 is modified (phosphothreonine). The next 5 helical transmembrane spans lie at 69 to 93 (LFEV…PHLA), 134 to 155 (LLGP…KDRN), 178 to 200 (KALY…RKIT), 255 to 275 (KPFA…LSYS), and 291 to 312 (WFNN…ASQA). Residue glutamate 367 participates in [CaMn4O5] cluster binding. Residues 447–471 (RARAAAAGFEKGIDRDFEPVLSMTP) form a helical membrane-spanning segment.

It belongs to the PsbB/PsbC family. PsbC subfamily. As to quaternary structure, PSII is composed of 1 copy each of membrane proteins PsbA, PsbB, PsbC, PsbD, PsbE, PsbF, PsbH, PsbI, PsbJ, PsbK, PsbL, PsbM, PsbT, PsbX, PsbY, PsbZ, Psb30/Ycf12, at least 3 peripheral proteins of the oxygen-evolving complex and a large number of cofactors. It forms dimeric complexes. Binds multiple chlorophylls and provides some of the ligands for the Ca-4Mn-5O cluster of the oxygen-evolving complex. It may also provide a ligand for a Cl- that is required for oxygen evolution. PSII binds additional chlorophylls, carotenoids and specific lipids. is required as a cofactor.

The protein localises to the plastid. Its subcellular location is the chloroplast thylakoid membrane. Its function is as follows. One of the components of the core complex of photosystem II (PSII). It binds chlorophyll and helps catalyze the primary light-induced photochemical processes of PSII. PSII is a light-driven water:plastoquinone oxidoreductase, using light energy to abstract electrons from H(2)O, generating O(2) and a proton gradient subsequently used for ATP formation. This chain is Photosystem II CP43 reaction center protein, found in Coffea arabica (Arabian coffee).